A 97-amino-acid chain; its full sequence is Putative pterin-4-alpha-carbinolamine dehydratase (97 aa).

The protein belongs to the pterin-4-alpha-carbinolamine dehydratase family.

It carries out the reaction (4aS,6R)-4a-hydroxy-L-erythro-5,6,7,8-tetrahydrobiopterin = (6R)-L-erythro-6,7-dihydrobiopterin + H2O. This is Putative pterin-4-alpha-carbinolamine dehydratase from Phenylobacterium zucineum (strain HLK1).